Consider the following 81-residue polypeptide: UPF0180 protein YkuS (81 aa).

This sequence belongs to the UPF0180 family.

This chain is UPF0180 protein YkuS (ykuS), found in Bacillus subtilis (strain 168).